Consider the following 953-residue polypeptide: Lysosomal alpha-glucosidase (953 aa).

An N-terminal signal peptide occupies residues 1 to 27 (MNIRKPLCSNSVVGACTLVSLTTAVIL). Residues 28-69 (GHLMLRELMLLPQDLHESSSGLWKTYRPHHQESYEPAPLHIQ) constitute a propeptide that is removed on maturation. The region spanning 80 to 131 (TQCDVTPNSRFDCAPDKGITQEQCEARGCCWVPAGQVLNGPVMGQPWCFFPP) is the P-type domain. Intrachain disulfides connect Cys82/Cys109, Cys92/Cys108, and Cys103/Cys127. N-linked (GlcNAc...) asparagine glycans are attached at residues Asn140, Asn233, and Asn390. Asp404 serves as a coordination point for substrate. Asn470 carries an N-linked (GlcNAc...) asparagine glycan. The active-site Nucleophile is the Asp518. Residue Glu521 is part of the active site. An intrachain disulfide couples Cys533 to Cys558. Substrate is bound by residues Arg600 and Asp616. A disulfide bridge connects residues Cys647 and Cys658. Residue Asn652 is glycosylated (N-linked (GlcNAc...) asparagine). Residue His674 coordinates substrate. Asn883 and Asn926 each carry an N-linked (GlcNAc...) asparagine glycan.

It belongs to the glycosyl hydrolase 31 family.

The protein localises to the lysosome. It is found in the lysosome membrane. It catalyses the reaction Hydrolysis of terminal, non-reducing (1-&gt;4)-linked alpha-D-glucose residues with release of alpha-D-glucose.. In terms of biological role, essential for the degradation of glycogen in lysosomes. Has highest activity on alpha-1,4-linked glycosidic linkages, but can also hydrolyze alpha-1,6-linked glucans. In Rattus norvegicus (Rat), this protein is Lysosomal alpha-glucosidase (Gaa).